Consider the following 475-residue polypeptide: Bifunctional protein HldE (475 aa).

The interval 1 to 318 (MKITLPEFGK…ANALYTEQET (318 aa)) is ribokinase. 195–198 (NMSE) is an ATP binding site. Residue Asp264 is part of the active site. A cytidylyltransferase region spans residues 344–475 (MTNGCFDILH…DIIKTIRERG (132 aa)).

This sequence in the N-terminal section; belongs to the carbohydrate kinase PfkB family. It in the C-terminal section; belongs to the cytidylyltransferase family. Homodimer.

The catalysed reaction is D-glycero-beta-D-manno-heptose 7-phosphate + ATP = D-glycero-beta-D-manno-heptose 1,7-bisphosphate + ADP + H(+). The enzyme catalyses D-glycero-beta-D-manno-heptose 1-phosphate + ATP + H(+) = ADP-D-glycero-beta-D-manno-heptose + diphosphate. It functions in the pathway nucleotide-sugar biosynthesis; ADP-L-glycero-beta-D-manno-heptose biosynthesis; ADP-L-glycero-beta-D-manno-heptose from D-glycero-beta-D-manno-heptose 7-phosphate: step 1/4. Its pathway is nucleotide-sugar biosynthesis; ADP-L-glycero-beta-D-manno-heptose biosynthesis; ADP-L-glycero-beta-D-manno-heptose from D-glycero-beta-D-manno-heptose 7-phosphate: step 3/4. Catalyzes the phosphorylation of D-glycero-D-manno-heptose 7-phosphate at the C-1 position to selectively form D-glycero-beta-D-manno-heptose-1,7-bisphosphate. In terms of biological role, catalyzes the ADP transfer from ATP to D-glycero-beta-D-manno-heptose 1-phosphate, yielding ADP-D-glycero-beta-D-manno-heptose. The polypeptide is Bifunctional protein HldE (Aeromonas salmonicida (strain A449)).